A 286-amino-acid polypeptide reads, in one-letter code: uncharacterized protein (286 aa).

Transmembrane regions (helical) follow at residues 30 to 50 (LTFM…LTVQ), 68 to 88 (LSTI…VTAF), 99 to 119 (WFWA…GILL), 136 to 156 (IVYA…LSAL), 169 to 189 (LFHI…LSFI), 205 to 225 (IIPG…VYFV), and 254 to 274 (SALF…YFIL).

The protein localises to the cell membrane. This is an uncharacterized protein from Mycoplasma genitalium (strain ATCC 33530 / DSM 19775 / NCTC 10195 / G37) (Mycoplasmoides genitalium).